An 87-amino-acid polypeptide reads, in one-letter code: Down syndrome critical region protein 10 (87 aa).

The sequence is that of Down syndrome critical region protein 10 (DSCR10) from Pan troglodytes (Chimpanzee).